The chain runs to 341 residues: Spore photoproduct lyase (341 aa).

In terms of domain architecture, Radical SAM core spans 76–304; that stretch reads SKPSAEYAIP…ESKRKYKWGR (229 aa). [4Fe-4S] cluster contacts are provided by Cys-90, Cys-94, and Cys-97. A DNA-binding region (H-T-H motif) is located at residues 217-234; that stretch reads QAARKVAGAGYKLGFVVA.

The protein belongs to the radical SAM superfamily. SPL family. Monomer or homodimer. [4Fe-4S] cluster is required as a cofactor. S-adenosyl-L-methionine serves as cofactor.

It catalyses the reaction (5R)-5,6-dihydro-5-(thymidin-7-yl)thymidine in DNA = a thymidine dimer in DNA. Functionally, involved in repair of UV radiation-induced DNA damage during spore germination. Can repair thymine dimer 5-thyminyl-5,6-dihydrothymine (known as spore photoproduct (SP)) by in situ monomerization of SP to two thymines. The protein is Spore photoproduct lyase (splG) of Geobacillus sp. (strain Y412MC61).